A 237-amino-acid chain; its full sequence is uncharacterized protein (237 aa).

The signal sequence occupies residues 1 to 27 (MKSFLRKPKFWLLLLGGLSTSSIILSA). Cys28 is lipidated: N-palmitoyl cysteine. The S-diacylglycerol cysteine moiety is linked to residue Cys28.

This sequence belongs to the MG307/MG309/MG338 family.

Its subcellular location is the membrane. This is an uncharacterized protein from Mycoplasma pneumoniae (strain ATCC 29342 / M129 / Subtype 1) (Mycoplasmoides pneumoniae).